Here is a 361-residue protein sequence, read N- to C-terminus: MLRLKNDRFIRALLRQPVDRTPVWIMRQAGRYLPEYRQLREKVPNFMAFCKTPELACEATLQPLRRFPLDAAIIFSDILTIPDAMGVDLHIAPTVGPVIRNPVRSAQDVNRLQMPAVEEALSYLFDAIRLTVKALDHRVPLIGFAGSPWTLACYMTEGQSSKTFLTARAMLYQQPDVFHTLLQKLTTLTIAYLNAQIKAGADVVMLFDTWGGLLTPSLYRQFSLDYLSQIAAEVVRQKNGRKIPLIFFTKNGGQWLESIANSGCDAVGLDWTTDIGQARRRVGDRVALQGNLDPAILLSNPESISTAAVDILKSYGQGSGHVFNLGHGIDPSTPIENVAALVEAVQNFSIKNEEPINSYYR.

Residues 27–31 (RQAGR), Asp77, Tyr154, Thr209, and His327 each bind substrate.

It belongs to the uroporphyrinogen decarboxylase family. In terms of assembly, homodimer.

The protein resides in the cytoplasm. The catalysed reaction is uroporphyrinogen III + 4 H(+) = coproporphyrinogen III + 4 CO2. It functions in the pathway porphyrin-containing compound metabolism; protoporphyrin-IX biosynthesis; coproporphyrinogen-III from 5-aminolevulinate: step 4/4. In terms of biological role, catalyzes the decarboxylation of four acetate groups of uroporphyrinogen-III to yield coproporphyrinogen-III. In Coxiella burnetii (strain Dugway 5J108-111), this protein is Uroporphyrinogen decarboxylase.